The sequence spans 389 residues: Lipid-A-disaccharide synthase (389 aa).

It belongs to the LpxB family.

It catalyses the reaction a lipid X + a UDP-2-N,3-O-bis[(3R)-3-hydroxyacyl]-alpha-D-glucosamine = a lipid A disaccharide + UDP + H(+). Its pathway is bacterial outer membrane biogenesis; LPS lipid A biosynthesis. Its function is as follows. Condensation of UDP-2,3-diacylglucosamine and 2,3-diacylglucosamine-1-phosphate to form lipid A disaccharide, a precursor of lipid A, a phosphorylated glycolipid that anchors the lipopolysaccharide to the outer membrane of the cell. This Verminephrobacter eiseniae (strain EF01-2) protein is Lipid-A-disaccharide synthase.